Here is a 655-residue protein sequence, read N- to C-terminus: Interferon-induced GTP-binding protein Mx2 (655 aa).

The segment covering 1-18 has biased composition (polar residues); it reads MVLSTEENTGVDSVNLPS. The disordered stretch occupies residues 1–28; the sequence is MVLSTEENTGVDSVNLPSGETGLGEKDQ. In terms of domain architecture, Dynamin-type G spans 60–333; that stretch reads DLALPAIAVI…LISHICKSLP (274 aa). Positions 70-77 are G1 motif; the sequence is GDQSSGKS. 70 to 77 provides a ligand contact to GTP; the sequence is GDQSSGKS. Residues 95 to 97 form a G2 motif region; the sequence is VTR. The tract at residues 171–174 is G3 motif; it reads DLPG. GTP-binding positions include 171–175 and 240–243; these read DLPGI and TKPD. A G4 motif region spans residues 240-243; sequence TKPD. Residues 272–275 form a G5 motif region; sequence KCRG. The disordered stretch occupies residues 542–562; sequence EAEEEKKTKHGTSSSSQSQDL. The span at 552 to 562 shows a compositional bias: low complexity; sequence GTSSSSQSQDL. The GED domain occupies 567-655; the sequence is MAEIFQHLNA…ARRRLAKFPG (89 aa).

Belongs to the TRAFAC class dynamin-like GTPase superfamily. Dynamin/Fzo/YdjA family.

The protein localises to the cytoplasm. Interferon-induced dynamin-like GTPase with antiviral activity against vesicular stomatitis virus (VSV) and Hantaan virus (HNTV). The chain is Interferon-induced GTP-binding protein Mx2 (Mx2) from Mus musculus (Mouse).